The sequence spans 143 residues: Deoxyuridine 5'-triphosphate nucleotidohydrolase (143 aa).

Residues 62–64 (RSG), Asn-75, and 79–81 (TID) each bind substrate.

The protein belongs to the dUTPase family. It depends on Mg(2+) as a cofactor.

The enzyme catalyses dUTP + H2O = dUMP + diphosphate + H(+). It participates in pyrimidine metabolism; dUMP biosynthesis; dUMP from dCTP (dUTP route): step 2/2. In terms of biological role, this enzyme is involved in nucleotide metabolism: it produces dUMP, the immediate precursor of thymidine nucleotides and it decreases the intracellular concentration of dUTP so that uracil cannot be incorporated into DNA. This Acaryochloris marina (strain MBIC 11017) protein is Deoxyuridine 5'-triphosphate nucleotidohydrolase.